The sequence spans 1249 residues: ATP-dependent helicase/nuclease subunit A (1249 aa).

Positions 5-482 (TNYTPSQQAV…IVLAENFRSV (478 aa)) constitute a UvrD-like helicase ATP-binding domain. Residue 26 to 33 (ASAGSGKT) participates in ATP binding. Residues 521–811 (ADMPQTTNLL…NVMTIHGSKG (291 aa)) form the UvrD-like helicase C-terminal domain.

Belongs to the helicase family. AddA subfamily. In terms of assembly, heterodimer of AddA and AddB/RexB. Mg(2+) serves as cofactor.

It catalyses the reaction Couples ATP hydrolysis with the unwinding of duplex DNA by translocating in the 3'-5' direction.. The enzyme catalyses ATP + H2O = ADP + phosphate + H(+). In terms of biological role, the heterodimer acts as both an ATP-dependent DNA helicase and an ATP-dependent, dual-direction single-stranded exonuclease. Recognizes the chi site generating a DNA molecule suitable for the initiation of homologous recombination. The AddA nuclease domain is required for chi fragment generation; this subunit has the helicase and 3' -&gt; 5' nuclease activities. This is ATP-dependent helicase/nuclease subunit A from Lactiplantibacillus plantarum (strain ATCC BAA-793 / NCIMB 8826 / WCFS1) (Lactobacillus plantarum).